Here is a 211-residue protein sequence, read N- to C-terminus: Guanylate kinase (211 aa).

Positions 5–184 constitute a Guanylate kinase-like domain; sequence GLLIVFSGPS…AAERVKRIIE (180 aa). 12–19 is an ATP binding site; the sequence is GPSGVGKG.

This sequence belongs to the guanylate kinase family.

The protein localises to the cytoplasm. It catalyses the reaction GMP + ATP = GDP + ADP. In terms of biological role, essential for recycling GMP and indirectly, cGMP. The sequence is that of Guanylate kinase from Streptococcus pyogenes serotype M1.